A 234-amino-acid polypeptide reads, in one-letter code: Putative ankyrin repeat protein RF_0063 (234 aa).

2 ANK repeats span residues 149-180 and 184-213; these read NNNTALHYAVDKNLEKLSISLINKMSIETISI and YNNTALHYATDNGLEVISWFLINNMTQKAL.

This Rickettsia felis (strain ATCC VR-1525 / URRWXCal2) (Rickettsia azadi) protein is Putative ankyrin repeat protein RF_0063.